The following is a 639-amino-acid chain: Extracellular metalloproteinase mep (639 aa).

The N-terminal stretch at 1–16 (MHMLSFIGALALPVFV) is a signal peptide. A propeptide spanning residues 17–245 (CAQSCEPASL…IHGVVDYISE (229 aa)) is cleaved from the precursor. Residues N287, N320, N336, and N368 are each glycosylated (N-linked (GlcNAc...) asparagine). Residue H429 participates in Zn(2+) binding. Residue E430 is part of the active site. H433 contacts Zn(2+). The N-linked (GlcNAc...) asparagine glycan is linked to N509.

Belongs to the peptidase M36 family. Zn(2+) serves as cofactor.

The protein resides in the secreted. Secreted metalloproteinase that allows assimilation of proteinaceous substrates. The protein is Extracellular metalloproteinase mep (mep) of Aspergillus flavus (strain ATCC 200026 / FGSC A1120 / IAM 13836 / NRRL 3357 / JCM 12722 / SRRC 167).